The primary structure comprises 320 residues: Cytosolic Fe-S cluster assembly factor NUBP1 (320 aa).

N-acetylmethionine is present on methionine 1. Residues cysteine 8, cysteine 22, cysteine 25, and cysteine 31 each contribute to the [4Fe-4S] cluster site. 62-69 is an ATP binding site; it reads GKGGVGKS. Cysteine 235 and cysteine 238 together coordinate [4Fe-4S] cluster. Serine 319 is subject to Phosphoserine.

It belongs to the Mrp/NBP35 ATP-binding proteins family. NUBP1/NBP35 subfamily. In terms of assembly, heterotetramer of 2 NUBP1 and 2 NUBP2 chains. Interacts with KIFC1. Interacts with the BBS/CCT complex subunit CCT1. It depends on [4Fe-4S] cluster as a cofactor.

The protein localises to the cytoplasm. It localises to the nucleus. It is found in the cell projection. The protein resides in the cytoskeleton. Its subcellular location is the cilium axoneme. The protein localises to the cilium basal body. It localises to the microtubule organizing center. It is found in the centrosome. The protein resides in the centriole. Functionally, component of the cytosolic iron-sulfur (Fe/S) protein assembly (CIA) machinery. Required for maturation of extramitochondrial Fe-S proteins. The NUBP1-NUBP2 heterotetramer forms a Fe-S scaffold complex, mediating the de novo assembly of an Fe-S cluster and its transfer to target apoproteins. Implicated in the regulation of centrosome duplication. Negatively regulates cilium formation and structure. This Rattus norvegicus (Rat) protein is Cytosolic Fe-S cluster assembly factor NUBP1.